A 206-amino-acid chain; its full sequence is Small ribosomal subunit protein eS8 (206 aa).

Residues 1-37 (MGISRDSRHKRSATGAKRAQFRKKRKFELGRQPANTK) are disordered.

It belongs to the eukaryotic ribosomal protein eS8 family. Component of the small ribosomal subunit. Mature ribosomes consist of a small (40S) and a large (60S) subunit. The 40S subunit contains about 32 different proteins and 1 molecule of RNA (18S). The 60S subunit contains 45 different proteins and 3 molecules of RNA (25S, 5.8S and 5S).

It localises to the cytoplasm. Component of the ribosome, a large ribonucleoprotein complex responsible for the synthesis of proteins in the cell. The small ribosomal subunit (SSU) binds messenger RNAs (mRNAs) and translates the encoded message by selecting cognate aminoacyl-transfer RNA (tRNA) molecules. The large subunit (LSU) contains the ribosomal catalytic site termed the peptidyl transferase center (PTC), which catalyzes the formation of peptide bonds, thereby polymerizing the amino acids delivered by tRNAs into a polypeptide chain. The nascent polypeptides leave the ribosome through a tunnel in the LSU and interact with protein factors that function in enzymatic processing, targeting, and the membrane insertion of nascent chains at the exit of the ribosomal tunnel. The sequence is that of Small ribosomal subunit protein eS8 (RPS8A) from Candida albicans (strain SC5314 / ATCC MYA-2876) (Yeast).